A 128-amino-acid chain; its full sequence is Glycine cleavage system H protein (128 aa).

Residues 24–106 (LVRIGISEFA…HGEGWLLIIR (83 aa)) enclose the Lipoyl-binding domain. Lys65 is modified (N6-lipoyllysine).

The protein belongs to the GcvH family. The glycine cleavage system is composed of four proteins: P, T, L and H. (R)-lipoate serves as cofactor.

Its function is as follows. The glycine cleavage system catalyzes the degradation of glycine. The H protein shuttles the methylamine group of glycine from the P protein to the T protein. The polypeptide is Glycine cleavage system H protein (Prochlorococcus marinus (strain NATL2A)).